The sequence spans 377 residues: Actin-related protein T2 (377 aa).

This sequence belongs to the actin family.

It localises to the cytoplasm. The protein resides in the cytoskeleton. This is Actin-related protein T2 (ACTRT2) from Bos taurus (Bovine).